A 385-amino-acid chain; its full sequence is MSAPTVPGAGIGLDDLPLRANLRGKKPYGAPQLTVPVQLNTNENPHPPSKALVDDVAESIRAVAAELHRYPDRDAVALRADLAAYLTRQTGIAVDTANVWAANGSNEILQQLLQAFGGPGRRALGFVPSYSMHPIISEGIDTEWVEARRNADFSLDIDHAVATIAERRPDVVFVTSPNNPTGHSIPGADLARILDAAPGIVVVDEAYAEFSAQPSAIGLIDRYPAKLVVSRTMSKAFAFAGGRLGYLVAAPAVIDALLLVRLPYHLSVVTQAAARAALRHADETLASVAELAAQRDRVAAELAASGFRVVPSDANFLLFGRFADAPRAWQRYLDHGVLIRDVGIPGHLRATIGLAAENDEFLRVSRLLAADELINDESDESTGTP.

Lys235 bears the N6-(pyridoxal phosphate)lysine mark.

It belongs to the class-II pyridoxal-phosphate-dependent aminotransferase family. Histidinol-phosphate aminotransferase subfamily. Homodimer. Pyridoxal 5'-phosphate serves as cofactor.

It catalyses the reaction L-histidinol phosphate + 2-oxoglutarate = 3-(imidazol-4-yl)-2-oxopropyl phosphate + L-glutamate. The protein operates within amino-acid biosynthesis; L-histidine biosynthesis; L-histidine from 5-phospho-alpha-D-ribose 1-diphosphate: step 7/9. The polypeptide is Histidinol-phosphate aminotransferase (Nocardia farcinica (strain IFM 10152)).